The sequence spans 257 residues: Distal membrane-arm assembly complex protein 2 (257 aa).

The residue at position 253 (Ser253) is a Phosphoserine.

It belongs to the ATP synthase subunit s family. Interacts with incompletely assembled mitochondrial NADH:ubiquinone oxidoreductase complex (complex I).

Its subcellular location is the mitochondrion. In terms of biological role, required for the assembly of the mitochondrial NADH:ubiquinone oxidoreductase complex (complex I). Involved in the assembly of the distal region of complex I. In Homo sapiens (Human), this protein is Distal membrane-arm assembly complex protein 2.